Consider the following 273-residue polypeptide: Nitrogenase iron protein (273 aa).

Residue 8 to 15 (GKGGIGKS) coordinates ATP. Residue Cys-95 coordinates [4Fe-4S] cluster. An ADP-ribosylarginine; by dinitrogenase reductase ADP-ribosyltransferase modification is found at Arg-98. [4Fe-4S] cluster is bound at residue Cys-130.

It belongs to the NifH/BchL/ChlL family. In terms of assembly, homodimer. [4Fe-4S] cluster is required as a cofactor. In terms of processing, the reversible ADP-ribosylation of Arg-98 inactivates the nitrogenase reductase and regulates nitrogenase activity.

The catalysed reaction is N2 + 8 reduced [2Fe-2S]-[ferredoxin] + 16 ATP + 16 H2O = H2 + 8 oxidized [2Fe-2S]-[ferredoxin] + 2 NH4(+) + 16 ADP + 16 phosphate + 6 H(+). Functionally, the key enzymatic reactions in nitrogen fixation are catalyzed by the nitrogenase complex, which has 2 components: the iron protein and the molybdenum-iron protein. The chain is Nitrogenase iron protein from Roseiflexus castenholzii (strain DSM 13941 / HLO8).